Reading from the N-terminus, the 303-residue chain is Protoheme IX farnesyltransferase (303 aa).

The next 9 membrane-spanning stretches (helical) occupy residues 25-45 (MGLV…AVVM), 54-74 (IPQI…ACAL), 104-124 (LLLL…LLNI), 125-145 (PSGV…SIWS), 151-171 (WNTV…WVAI), 179-199 (AIAL…ALAI), 227-247 (FIWL…GVVF), 248-268 (VVLA…TFKK), and 280-300 (FIYS…VSLL).

Belongs to the UbiA prenyltransferase family. Protoheme IX farnesyltransferase subfamily. In terms of assembly, interacts with CtaA.

The protein localises to the cell membrane. The enzyme catalyses heme b + (2E,6E)-farnesyl diphosphate + H2O = Fe(II)-heme o + diphosphate. It functions in the pathway porphyrin-containing compound metabolism; heme O biosynthesis; heme O from protoheme: step 1/1. Functionally, converts heme B (protoheme IX) to heme O by substitution of the vinyl group on carbon 2 of heme B porphyrin ring with a hydroxyethyl farnesyl side group. In Staphylococcus aureus (strain Mu3 / ATCC 700698), this protein is Protoheme IX farnesyltransferase.